We begin with the raw amino-acid sequence, 207 residues long: Large ribosomal subunit protein uL4 (207 aa).

A disordered region spans residues 44–78; the sequence is LRQGTHKTKTRSEVRGGGRKPWRQKGTGRARQGSI. Over residues 60–71 the composition is skewed to basic residues; the sequence is GGRKPWRQKGTG.

This sequence belongs to the universal ribosomal protein uL4 family. Part of the 50S ribosomal subunit.

In terms of biological role, one of the primary rRNA binding proteins, this protein initially binds near the 5'-end of the 23S rRNA. It is important during the early stages of 50S assembly. It makes multiple contacts with different domains of the 23S rRNA in the assembled 50S subunit and ribosome. Forms part of the polypeptide exit tunnel. The sequence is that of Large ribosomal subunit protein uL4 from Halalkalibacterium halodurans (strain ATCC BAA-125 / DSM 18197 / FERM 7344 / JCM 9153 / C-125) (Bacillus halodurans).